The chain runs to 334 residues: DNA-directed RNA polymerase subunit alpha (334 aa).

Residues 1 to 232 form an alpha N-terminal domain (alpha-NTD) region; sequence MVREEIAVST…IDLFIPFLHA (232 aa). The interval 268–334 is alpha C-terminal domain (alpha-CTD); the sequence is GIALKCIFID…ILQKHFTIDC (67 aa).

The protein belongs to the RNA polymerase alpha chain family. In plastids the minimal PEP RNA polymerase catalytic core is composed of four subunits: alpha, beta, beta', and beta''. When a (nuclear-encoded) sigma factor is associated with the core the holoenzyme is formed, which can initiate transcription.

Its subcellular location is the plastid. The protein localises to the chloroplast. It catalyses the reaction RNA(n) + a ribonucleoside 5'-triphosphate = RNA(n+1) + diphosphate. Its function is as follows. DNA-dependent RNA polymerase catalyzes the transcription of DNA into RNA using the four ribonucleoside triphosphates as substrates. The sequence is that of DNA-directed RNA polymerase subunit alpha from Chloranthus spicatus (Chulantree).